We begin with the raw amino-acid sequence, 61 residues long: Metallothionein-1F (61 aa).

Position 1 is an N-acetylmethionine (M1). The beta stretch occupies residues 1 to 29 (MDPNCSCPTGGSCTCAGSCTCKACRCTSC). A divalent metal cation-binding residues include C5, C7, C13, C15, C19, C21, C24, C26, C29, C33, C34, C36, C37, C41, C44, C48, C50, and C57. The tract at residues 30–61 (KKSCCSCCPAGCAKCAQGCICKGASDKCSCCA) is alpha. S58 carries the phosphoserine modification. A divalent metal cation contacts are provided by C59 and C60.

Belongs to the metallothionein superfamily. Type 1 family. As to quaternary structure, monomer.

Functionally, metallothioneins have a high content of cysteine residues that bind various heavy metals; these proteins are transcriptionally regulated by both heavy metals and glucocorticoids. This chain is Metallothionein-1F (MT1F), found in Sus scrofa (Pig).